A 243-amino-acid polypeptide reads, in one-letter code: CRISPR-associated endoribonuclease Cas6 (243 aa).

This sequence belongs to the CRISPR-associated endoribonuclease Cas6 family. In terms of assembly, part of the Csm effector complex that includes at least Cas10(1), Csm2(3), Csm3(5), Csm4(1); the presence of Csm5 and Cas6 may depend on the processing state of precursor crRNA. Csm with a precursor crRNA does not include Csm5, while Cas6, the enzyme probably involved in pre-crRNA processing, is found associated with a subset of the Csm complex that is probably in the process of pre-crRNA maturation. The Csm complex is elongated and slightly twisted with a maximal length of 215 Angstroms and a diameter of 75-80 Angstroms. It has been modeled to have a central protein filamant of Csm3 subunits along which the dsRNA helix of paired crRNA and target RNA binds. The filament is capped at one end by Cas10 and Csm4 and at the other end by Csm5; ssDNA is thought to bind to the N-terminal HD domain of Cas10.

Its function is as follows. CRISPR (clustered regularly interspaced short palindromic repeat) is an adaptive immune system that provides protection against mobile genetic elements (viruses, transposable elements and conjugative plasmids). CRISPR clusters contain spacers, sequences complementary to antecedent mobile elements, and target invading nucleic acids. CRISPR clusters are transcribed and processed into CRISPR RNA (crRNA). The type III-A Csm effector complex binds crRNA and acts as a crRNA-guided RNase, DNase and cyclic oligoadenylate synthase; binding of target RNA cognate to the crRNA is required for all activities. In a heterologous host this Csm effector complex restricts ssRNA phage MS2, suggesting it may target RNA viruses in vivo. Csm functions as a non-specific ssDNase. Base-pairing between crRNA and target RNA to form a ternary Csm complex activates a ssDNase activity; target RNA cleavage suppresses the ssDNase, a temporal control that prevents uncontrolled DNA degradation. Viral RNA transcripts probably tether the Csm complex to the viral genome, recruiting Cas10 ssDNA activity which is able to degrade DNA in the transcription bubble, spatially controlling the DNase activity. In terms of biological role, this protein processes pre-crRNA into individual crRNA units. This Streptococcus thermophilus protein is CRISPR-associated endoribonuclease Cas6.